The following is a 430-amino-acid chain: Glutamate-1-semialdehyde 2,1-aminomutase 2 (430 aa).

Lys269 carries the N6-(pyridoxal phosphate)lysine modification.

The protein belongs to the class-III pyridoxal-phosphate-dependent aminotransferase family. HemL subfamily. In terms of assembly, homodimer. Pyridoxal 5'-phosphate is required as a cofactor.

The protein resides in the cytoplasm. It carries out the reaction (S)-4-amino-5-oxopentanoate = 5-aminolevulinate. It functions in the pathway porphyrin-containing compound metabolism; protoporphyrin-IX biosynthesis; 5-aminolevulinate from L-glutamyl-tRNA(Glu): step 2/2. This chain is Glutamate-1-semialdehyde 2,1-aminomutase 2, found in Bacillus pumilus (strain SAFR-032).